The following is a 177-amino-acid chain: Thymidine kinase (177 aa).

11-18 (GPMFSGKS) serves as a coordination point for ATP. Residue Glu-83 is the Proton acceptor of the active site. Residue Phe-113 coordinates substrate. Positions 138 and 141 each coordinate Zn(2+). 157 to 161 (IEIIG) is a binding site for substrate. Cys-170 and Cys-173 together coordinate Zn(2+).

The protein belongs to the thymidine kinase family. Homotetramer. Two molecules of substrate bind to each enzyme tetramer.

The catalysed reaction is thymidine + ATP = dTMP + ADP + H(+). Functionally, phosphorylates thymidine and thymidine analogs, such as azidothymidine (AZT). Part of the salvage pathway for pyrimidine deoxyribonucleotide synthesis. In Homo sapiens (Human), this protein is Thymidine kinase (OPG101).